The primary structure comprises 520 residues: RING-type E3 ubiquitin-protein ligase PPIL2 (520 aa).

A U-box domain is found at 35-108 (RRLPFDHCSL…GKYHCPVLFT (74 aa)). A coiled-coil region spans residues 197 to 217 (LKNTNAETRETLQELYKEFKG). Lys-216 is covalently cross-linked (Glycyl lysine isopeptide (Lys-Gly) (interchain with G-Cter in SUMO2)). Residues 278 to 433 (KKGYVRLHTN…EEIRIDATTV (156 aa)) form the PPIase cyclophilin-type domain. Positions 456–520 (APETKVKSSQ…SRGFGDFSSW (65 aa)) are disordered. Residues 463–474 (SSQPQAGSQGPQ) show a composition bias toward low complexity. Phosphoserine is present on Ser-470. Residue Lys-482 is modified to N6-acetyllysine.

It belongs to the cyclophilin-type PPIase family. PPIL2 subfamily. As to quaternary structure, component of the minor spliceosome, which splices U12-type introns. Within this complex, interacts with PRPF8/PRP8, EFTUD2/SNU114 and PLRG1. Interacts with isoform 2 of BSG. Interacts (via the PPIase cyclophilin-type domain) with CRNKL1; they may form a trimeric complex with HSP90. As to expression, highest expression in thymus, pancreas and testis. Also detected in heart, placenta, lung, liver, skeletal muscle, kidney, spleen, prostate, ovary, small intestine and colon. Poorly detected in brain and leukocytes. Strong protein expression in lymph node (cortical, paracortical and medullar regions), thyroid (follicular epithelial cells), testis (developing spermatozoa), stomach (cells lining the gastric pit), pancreas, kidney (proximal and distal-tubule cells and collecting duct cells but not in glomeruli), endometrium and colon (goblet cells). Moderate protein expression in spleen, prostate (epithelium and squamous cell carcinomas), placenta and adrenal gland. Weak protein expression in liver, heart, breast, ovary, and lung. No protein expression in brain and bladder. High protein expression in most lymphomas and melanomas.

The protein localises to the nucleus. It carries out the reaction S-ubiquitinyl-[E2 ubiquitin-conjugating enzyme]-L-cysteine + [acceptor protein]-L-lysine = [E2 ubiquitin-conjugating enzyme]-L-cysteine + N(6)-ubiquitinyl-[acceptor protein]-L-lysine.. The protein operates within protein modification; protein ubiquitination. Its function is as follows. Has a ubiquitin-protein ligase activity acting as an E3 ubiquitin protein ligase or as an ubiquitin-ubiquitin ligase promoting elongation of ubiquitin chains on substrates. By mediating 'Lys-48'-linked polyubiquitination of proteins could target them for proteasomal degradation. May also function as a chaperone, playing a role in transport to the cell membrane of BSG/Basigin for instance. Probable inactive PPIase with no peptidyl-prolyl cis-trans isomerase activity. As a component of the minor spliceosome, involved in the splicing of U12-type introns in pre-mRNAs. The chain is RING-type E3 ubiquitin-protein ligase PPIL2 from Homo sapiens (Human).